Consider the following 668-residue polypeptide: BTB/POZ domain-containing protein At5g66560 (668 aa).

Positions 21-133 (SDIEIEVDDM…CYGVKMDLSA (113 aa)) constitute a BTB domain. Positions 73 to 84 (ETDKKGKGHEIE) are enriched in basic and acidic residues. The tract at residues 73–98 (ETDKKGKGHEIEDDKEEEEVEEQEIE) is disordered. Over residues 85-98 (DDKEEEEVEEQEIE) the composition is skewed to acidic residues. Residues 254–530 (ELWFEDLTQL…VQVLFFEQLQ (277 aa)) enclose the NPH3 domain. The residue at position 471 (tyrosine 471) is a Phosphotyrosine.

It belongs to the NPH3 family.

The protein operates within protein modification; protein ubiquitination. Its function is as follows. May act as a substrate-specific adapter of an E3 ubiquitin-protein ligase complex (CUL3-RBX1-BTB) which mediates the ubiquitination and subsequent proteasomal degradation of target proteins. In Arabidopsis thaliana (Mouse-ear cress), this protein is BTB/POZ domain-containing protein At5g66560.